A 187-amino-acid chain; its full sequence is Guanylate kinase (187 aa).

The Guanylate kinase-like domain occupies 5–183; it reads GRLTVLTGPS…ALKQLETHMQ (179 aa). An ATP-binding site is contributed by 12–19; the sequence is GPSGVGKG.

Belongs to the guanylate kinase family.

It is found in the cytoplasm. The enzyme catalyses GMP + ATP = GDP + ADP. The catalysed reaction is dZMP + ATP = dZDP + ADP. It functions in the pathway purine metabolism. Functionally, essential for recycling GMP and indirectly, cGMP. Its function is as follows. (Microbial infection) Catalyzes the phosphorylation of dZMP to dZDP, when the bacterium is infected by a phage that produces the substrate for the synthesis of dZTP (2- amino-2'-deoxyadenosine 5'-triphosphate), which is then used by the phage as a DNA polymerase substrate. The protein is Guanylate kinase of Synechococcus sp. (strain CC9902).